Reading from the N-terminus, the 326-residue chain is Protein phosphatase 1 regulatory subunit SDS22 homolog (326 aa).

Positions M1 to E22 are disordered. LRR repeat units lie at residues D35–F57, P58–L80, V81–L102, V103–K126, E128–L146, T147–N170, D172–L190, Q191–L212, N213–N236, L238–L256, E257–K280, and L281–R304.

This sequence belongs to the SDS22 family.

The protein localises to the nucleus. In terms of biological role, regulatory subunit of protein phosphatase 1. This Caenorhabditis elegans protein is Protein phosphatase 1 regulatory subunit SDS22 homolog (sds-22).